Reading from the N-terminus, the 139-residue chain is ATP synthase epsilon chain (139 aa).

The disordered stretch occupies residues 89–110 (EARAEQARAEAEARRREAQSER).

It belongs to the ATPase epsilon chain family. In terms of assembly, F-type ATPases have 2 components, CF(1) - the catalytic core - and CF(0) - the membrane proton channel. CF(1) has five subunits: alpha(3), beta(3), gamma(1), delta(1), epsilon(1). CF(0) has three main subunits: a, b and c.

Its subcellular location is the cell membrane. In terms of biological role, produces ATP from ADP in the presence of a proton gradient across the membrane. This chain is ATP synthase epsilon chain, found in Chloroflexus aurantiacus (strain ATCC 29366 / DSM 635 / J-10-fl).